Reading from the N-terminus, the 513-residue chain is ATP synthase subunit alpha (513 aa).

169–176 contributes to the ATP binding site; the sequence is GDRQTGKT.

This sequence belongs to the ATPase alpha/beta chains family. As to quaternary structure, F-type ATPases have 2 components, CF(1) - the catalytic core - and CF(0) - the membrane proton channel. CF(1) has five subunits: alpha(3), beta(3), gamma(1), delta(1), epsilon(1). CF(0) has three main subunits: a(1), b(2) and c(9-12). The alpha and beta chains form an alternating ring which encloses part of the gamma chain. CF(1) is attached to CF(0) by a central stalk formed by the gamma and epsilon chains, while a peripheral stalk is formed by the delta and b chains.

Its subcellular location is the cell inner membrane. It carries out the reaction ATP + H2O + 4 H(+)(in) = ADP + phosphate + 5 H(+)(out). Functionally, produces ATP from ADP in the presence of a proton gradient across the membrane. The alpha chain is a regulatory subunit. This chain is ATP synthase subunit alpha, found in Salmonella paratyphi C (strain RKS4594).